A 179-amino-acid polypeptide reads, in one-letter code: Large ribosomal subunit protein uL6 (179 aa).

It belongs to the universal ribosomal protein uL6 family. Part of the 50S ribosomal subunit.

Functionally, this protein binds to the 23S rRNA, and is important in its secondary structure. It is located near the subunit interface in the base of the L7/L12 stalk, and near the tRNA binding site of the peptidyltransferase center. The polypeptide is Large ribosomal subunit protein uL6 (Chlorobium phaeobacteroides (strain DSM 266 / SMG 266 / 2430)).